We begin with the raw amino-acid sequence, 294 residues long: 3-methyl-2-oxobutanoate hydroxymethyltransferase (294 aa).

Over residues 1–12 the composition is skewed to polar residues; sequence MSASAESTNATP. The interval 1-21 is disordered; sequence MSASAESTNATPYGTLPPTAA. Aspartate 69 and aspartate 112 together coordinate Mg(2+). Residues 69 to 70, aspartate 112, and lysine 141 contribute to the 3-methyl-2-oxobutanoate site; that span reads DS. Glutamate 143 provides a ligand contact to Mg(2+). Glutamate 210 acts as the Proton acceptor in catalysis.

The protein belongs to the PanB family. In terms of assembly, homodecamer; pentamer of dimers. Mg(2+) is required as a cofactor.

It localises to the cytoplasm. It catalyses the reaction 3-methyl-2-oxobutanoate + (6R)-5,10-methylene-5,6,7,8-tetrahydrofolate + H2O = 2-dehydropantoate + (6S)-5,6,7,8-tetrahydrofolate. The protein operates within cofactor biosynthesis; (R)-pantothenate biosynthesis; (R)-pantoate from 3-methyl-2-oxobutanoate: step 1/2. Its function is as follows. Catalyzes the reversible reaction in which hydroxymethyl group from 5,10-methylenetetrahydrofolate is transferred onto alpha-ketoisovalerate to form ketopantoate. The polypeptide is 3-methyl-2-oxobutanoate hydroxymethyltransferase (Albidiferax ferrireducens (strain ATCC BAA-621 / DSM 15236 / T118) (Rhodoferax ferrireducens)).